The following is a 46-amino-acid chain: uncharacterized protein (46 aa).

The protein resides in the mitochondrion. This is an uncharacterized protein from Saccharomyces cerevisiae (strain ATCC 204508 / S288c) (Baker's yeast).